The sequence spans 249 residues: Methyl-coenzyme M reductase subunit gamma (249 aa).

Residues Arg-43–Pro-62 form a disordered region. Residue Arg-120 coordinates coenzyme M.

It belongs to the methyl-coenzyme M reductase gamma subunit family. In terms of assembly, MCR is a hexamer of two alpha, two beta, and two gamma chains, forming a dimer of heterotrimers. Requires coenzyme F430 as cofactor.

Its subcellular location is the cytoplasm. The catalysed reaction is coenzyme B + methyl-coenzyme M = methane + coenzyme M-coenzyme B heterodisulfide. Its pathway is one-carbon metabolism; methyl-coenzyme M reduction; methane from methyl-coenzyme M: step 1/1. Component of the methyl-coenzyme M reductase (MCR) I that catalyzes the reductive cleavage of methyl-coenzyme M (CoM-S-CH3 or 2-(methylthio)ethanesulfonate) using coenzyme B (CoB or 7-mercaptoheptanoylthreonine phosphate) as reductant which results in the production of methane and the mixed heterodisulfide of CoB and CoM (CoM-S-S-CoB). This is the final step in methanogenesis. In Methanothermus fervidus, this protein is Methyl-coenzyme M reductase subunit gamma (mcrG).